Consider the following 166-residue polypeptide: PTS system glucose-specific EIIA component (166 aa).

One can recognise a PTS EIIA type-1 domain in the interval 34–138 (DPVFAQKMMG…SVISPIIITN (105 aa)). Positions 71 and 86 each coordinate Zn(2+). His86 acts as the Tele-phosphohistidine intermediate; for EIIA activity in catalysis. At His86 the chain carries Phosphohistidine; by HPr.

Heterodimer with glycerol kinase (glpk). Zn(2+) serves as cofactor.

Its subcellular location is the cytoplasm. In terms of biological role, the phosphoenolpyruvate-dependent sugar phosphotransferase system (sugar PTS), a major carbohydrate active transport system, catalyzes the phosphorylation of incoming sugar substrates concomitantly with their translocation across the cell membrane. The enzyme II complex composed of PtsG and Crr is involved in glucose transport. The chain is PTS system glucose-specific EIIA component (crr) from Staphylococcus aureus (strain Mu50 / ATCC 700699).